A 194-amino-acid chain; its full sequence is AP-3 complex subunit sigma (194 aa).

This sequence belongs to the adaptor complexes small subunit family. In terms of assembly, adaptor protein complex 3 (AP-3) is a heterotetramer composed of 2 large adaptins (APL5 and APL6), a medium adaptin (APM3) and a small adaptin (APS3).

It is found in the golgi apparatus. The protein resides in the cytoplasmic vesicle membrane. Functionally, part of the AP-3 complex, an adaptor-related complex which is not clathrin-associated. The complex is associated with the Golgi region as well as more peripheral structures. It facilitates the budding of vesicles from the Golgi membrane and may be directly involved in trafficking to the vacuole. Required for the transport via the ALP pathway, which directs the transport of the cargo proteins PHO8 and VAM3 to the vacuole. This chain is AP-3 complex subunit sigma (APS3), found in Saccharomyces cerevisiae (strain ATCC 204508 / S288c) (Baker's yeast).